The following is a 191-amino-acid chain: Phosphopantetheine adenylyltransferase (191 aa).

Residue Ser-8 participates in substrate binding. ATP is bound by residues 8-9 (SF) and His-16. Residues Lys-40, Thr-72, and Arg-86 each contribute to the substrate site. ATP contacts are provided by residues 87-89 (GLR), Glu-97, and 122-128 (YSFLSSS).

This sequence belongs to the bacterial CoaD family. In terms of assembly, homohexamer. It depends on Mg(2+) as a cofactor.

Its subcellular location is the cytoplasm. The enzyme catalyses (R)-4'-phosphopantetheine + ATP + H(+) = 3'-dephospho-CoA + diphosphate. The protein operates within cofactor biosynthesis; coenzyme A biosynthesis; CoA from (R)-pantothenate: step 4/5. In terms of biological role, reversibly transfers an adenylyl group from ATP to 4'-phosphopantetheine, yielding dephospho-CoA (dPCoA) and pyrophosphate. The protein is Phosphopantetheine adenylyltransferase of Nostoc sp. (strain PCC 7120 / SAG 25.82 / UTEX 2576).